We begin with the raw amino-acid sequence, 495 residues long: Mesoderm induction early response protein 1 (495 aa).

2 disordered regions span residues 1–25 and 76–131; these read MAEPSLRTASPGGSAASDDHEFEPS and GSTV…PSFT. A compositionally biased stretch (acidic residues) spans 83–94; that stretch reads GEEEEDEEDMDN. Over residues 120 to 130 the composition is skewed to polar residues; sequence QSSNDDPTPSF. The ELM2 domain occupies 171–269; the sequence is KEIMVGSMFQ…EALRRLRFNV (99 aa). The 53-residue stretch at 274–326 folds into the SANT domain; that stretch reads EELSVWTEEECRNFEQGLKAYGKDFHLIQANKVRTRSVGECVAFYYMWKKSER. 2 disordered regions span residues 356–397 and 416–495; these read DESE…NGVS and HLNG…HGEV. Composition is skewed to polar residues over residues 387–397 and 420–440; these read TASNNTQNGVS and PTISSSDPSSNETDTNGYNRE. Residues 462 to 476 show a composition bias toward basic and acidic residues; the sequence is TNERPIKRQRMDSPG. Positions 477–489 are enriched in polar residues; sequence KESTGSSEFSQEV.

Its subcellular location is the nucleus. Functionally, transcriptional repressor regulating the expression of a number of genes. Probably functions through recruitment of histone deacetylases involved in chromatin silencing. The sequence is that of Mesoderm induction early response protein 1 (mier1) from Xenopus laevis (African clawed frog).